Consider the following 503-residue polypeptide: Probable cytosol aminopeptidase (503 aa).

Positions 274 and 279 each coordinate Mn(2+). Residue Lys286 is part of the active site. Residues Asp297, Asp356, and Glu358 each coordinate Mn(2+). The active site involves Arg360.

It belongs to the peptidase M17 family. Mn(2+) is required as a cofactor.

The protein localises to the cytoplasm. It carries out the reaction Release of an N-terminal amino acid, Xaa-|-Yaa-, in which Xaa is preferably Leu, but may be other amino acids including Pro although not Arg or Lys, and Yaa may be Pro. Amino acid amides and methyl esters are also readily hydrolyzed, but rates on arylamides are exceedingly low.. The enzyme catalyses Release of an N-terminal amino acid, preferentially leucine, but not glutamic or aspartic acids.. Its function is as follows. Presumably involved in the processing and regular turnover of intracellular proteins. Catalyzes the removal of unsubstituted N-terminal amino acids from various peptides. In Paraburkholderia phymatum (strain DSM 17167 / CIP 108236 / LMG 21445 / STM815) (Burkholderia phymatum), this protein is Probable cytosol aminopeptidase.